A 296-amino-acid chain; its full sequence is Ribonuclease MRP protein subunit POP4 (296 aa).

Disordered regions lie at residues leucine 29–lysine 74 and serine 148–lysine 173. Residues lysine 36–glutamine 56 show a composition bias toward basic and acidic residues. Over residues alanine 57 to threonine 66 the composition is skewed to polar residues. The Nuclear localization signal signature appears at serine 160–methionine 167. Positions serine 163 to lysine 173 are enriched in basic residues.

This sequence belongs to the eukaryotic/archaeal RNase P protein component 1 family. As to quaternary structure, component of nuclear RNase MRP complexes. Several subunits of RNase P are also part of the RNase MRP complex. RNase MRP consists of a catalytic RNA moiety and several protein subunits.

The protein localises to the nucleus. Functionally, component of the MRP ribonuclease complex, which cleaves pre-rRNA sequences. Required for rRNA maturation, including 5.8S rRNA processing. Seems not involved in tRNA maturation. The polypeptide is Ribonuclease MRP protein subunit POP4 (Arabidopsis thaliana (Mouse-ear cress)).